The following is a 2226-amino-acid chain: Rotatin (2226 aa).

A disordered region spans residues 295–345 (ARGTHHSQNPSPGSSSPRPSVVGRTGQRPRGDGQDWDAASSSGSSSHAHVN). Composition is skewed to low complexity over residues 304–318 (PSPGSSSPRPSVVGR) and 332–343 (AASSSGSSSHAH). Residue S310 is modified to Phosphoserine. K811 is subject to N6-acetyllysine. The interval 1534–1554 (SRTSQDRDPSSLSTSETTVAP) is disordered. The span at 1543–1554 (SSLSTSETTVAP) shows a compositional bias: polar residues.

Belongs to the rotatin family. Interacts with PPP1R35; this interaction allows the mutual recruitment to the centriole.

It localises to the cytoplasm. Its subcellular location is the cytoskeleton. The protein localises to the cilium basal body. The protein resides in the microtubule organizing center. It is found in the centrosome. Involved in the genetic cascade that governs left-right specification. Plays a role in the maintenance of a normal ciliary structure. Required for correct asymmetric expression of NODAL, LEFTY and PITX2. In Homo sapiens (Human), this protein is Rotatin.